The primary structure comprises 484 residues: RxLR effector protein PexRD18 (484 aa).

An N-terminal signal peptide occupies residues 1–20 (MSHQRILLLLMAAFFAWVSA). Residues 55–79 (RFLRLYDAEVRDTVRGDNDVDREER) carry the RxLR-dEER motif.

The protein belongs to the RxLR effector family.

The protein resides in the secreted. It is found in the host cell membrane. In terms of biological role, effector that enhances P.infestans colonization of Nicotiana benthamiana leaves. This chain is RxLR effector protein PexRD18, found in Phytophthora infestans (strain T30-4) (Potato late blight agent).